A 364-amino-acid chain; its full sequence is UDP-N-acetylglucosamine--N-acetylmuramyl-(pentapeptide) pyrophosphoryl-undecaprenol N-acetylglucosamine transferase (364 aa).

UDP-N-acetyl-alpha-D-glucosamine-binding positions include 10-12 (TGG), Asn-126, Arg-167, Ser-199, Ile-253, and Gln-298.

This sequence belongs to the glycosyltransferase 28 family. MurG subfamily.

The protein localises to the cell inner membrane. It carries out the reaction di-trans,octa-cis-undecaprenyl diphospho-N-acetyl-alpha-D-muramoyl-L-alanyl-D-glutamyl-meso-2,6-diaminopimeloyl-D-alanyl-D-alanine + UDP-N-acetyl-alpha-D-glucosamine = di-trans,octa-cis-undecaprenyl diphospho-[N-acetyl-alpha-D-glucosaminyl-(1-&gt;4)]-N-acetyl-alpha-D-muramoyl-L-alanyl-D-glutamyl-meso-2,6-diaminopimeloyl-D-alanyl-D-alanine + UDP + H(+). It participates in cell wall biogenesis; peptidoglycan biosynthesis. Its function is as follows. Cell wall formation. Catalyzes the transfer of a GlcNAc subunit on undecaprenyl-pyrophosphoryl-MurNAc-pentapeptide (lipid intermediate I) to form undecaprenyl-pyrophosphoryl-MurNAc-(pentapeptide)GlcNAc (lipid intermediate II). The polypeptide is UDP-N-acetylglucosamine--N-acetylmuramyl-(pentapeptide) pyrophosphoryl-undecaprenol N-acetylglucosamine transferase (Amoebophilus asiaticus (strain 5a2)).